Consider the following 178-residue polypeptide: UPF0228 protein MA_4223 (178 aa).

The protein belongs to the UPF0228 family.

This chain is UPF0228 protein MA_4223, found in Methanosarcina acetivorans (strain ATCC 35395 / DSM 2834 / JCM 12185 / C2A).